The sequence spans 950 residues: Glycine dehydrogenase (decarboxylating) (950 aa).

Lys-698 carries the post-translational modification N6-(pyridoxal phosphate)lysine.

Belongs to the GcvP family. In terms of assembly, the glycine cleavage system is composed of four proteins: P, T, L and H. Requires pyridoxal 5'-phosphate as cofactor.

It catalyses the reaction N(6)-[(R)-lipoyl]-L-lysyl-[glycine-cleavage complex H protein] + glycine + H(+) = N(6)-[(R)-S(8)-aminomethyldihydrolipoyl]-L-lysyl-[glycine-cleavage complex H protein] + CO2. In terms of biological role, the glycine cleavage system catalyzes the degradation of glycine. The P protein binds the alpha-amino group of glycine through its pyridoxal phosphate cofactor; CO(2) is released and the remaining methylamine moiety is then transferred to the lipoamide cofactor of the H protein. This chain is Glycine dehydrogenase (decarboxylating), found in Neisseria gonorrhoeae (strain NCCP11945).